The primary structure comprises 348 residues: E3 ubiquitin-protein ligase MARCHF9 (348 aa).

The interval 48 to 96 (ARDGDGDEEEYYGSEPRARGLAGDKEPRAGPPPPPAPPPPPPGALDALS) is disordered. A compositionally biased stretch (basic and acidic residues) spans 63–75 (PRARGLAGDKEPR). Over residues 76–90 (AGPPPPPAPPPPPPG) the composition is skewed to pro residues. The segment at 102–162 (DSGLRTPQCR…ELCYFKYQVL (61 aa)) adopts an RING-CH-type zinc-finger fold. The Zn(2+) site is built by Cys110, Cys113, Cys126, Cys128, His136, Cys139, Cys152, and Cys155. The next 2 helical transmembrane spans lie at 185-205 (IAAI…LIWS) and 219-239 (LFQI…GLIV). 2 disordered regions span residues 272–304 (GDTG…AAQR) and 328–348 (PPDA…VTTV).

In terms of assembly, homodimer.

The protein resides in the golgi apparatus membrane. The protein localises to the lysosome membrane. The enzyme catalyses S-ubiquitinyl-[E2 ubiquitin-conjugating enzyme]-L-cysteine + [acceptor protein]-L-lysine = [E2 ubiquitin-conjugating enzyme]-L-cysteine + N(6)-ubiquitinyl-[acceptor protein]-L-lysine.. The protein operates within protein modification; protein ubiquitination. In terms of biological role, E3 ubiquitin-protein ligase that may mediate ubiquitination of MHC-I, CD4 and ICAM1, and promote their subsequent endocytosis and sorting to lysosomes via multivesicular bodies. E3 ubiquitin ligases accept ubiquitin from an E2 ubiquitin-conjugating enzyme in the form of a thioester and then directly transfer the ubiquitin to targeted substrates. The polypeptide is E3 ubiquitin-protein ligase MARCHF9 (Marchf9) (Mus musculus (Mouse)).